The following is a 274-amino-acid chain: 4-diphosphocytidyl-2-C-methyl-D-erythritol kinase (274 aa).

K8 is a catalytic residue. 94–104 (PSGAGLGGGSA) lines the ATP pocket. D136 is an active-site residue.

This sequence belongs to the GHMP kinase family. IspE subfamily.

The catalysed reaction is 4-CDP-2-C-methyl-D-erythritol + ATP = 4-CDP-2-C-methyl-D-erythritol 2-phosphate + ADP + H(+). Its pathway is isoprenoid biosynthesis; isopentenyl diphosphate biosynthesis via DXP pathway; isopentenyl diphosphate from 1-deoxy-D-xylulose 5-phosphate: step 3/6. Functionally, catalyzes the phosphorylation of the position 2 hydroxy group of 4-diphosphocytidyl-2C-methyl-D-erythritol. The polypeptide is 4-diphosphocytidyl-2-C-methyl-D-erythritol kinase (Bacteroides fragilis (strain YCH46)).